The sequence spans 472 residues: Nucleoporin NUP49/NSP49 (472 aa).

One copy of the FG 1 repeat lies at 2-3 (FG). A GLFG 1 repeat occupies 14-17 (GLFG). The disordered stretch occupies residues 28–104 (NTGFSFGGTQ…TANTGGGLFG (77 aa)). Residues 33 to 34 (FG) form an FG 2 repeat. One copy of the GLFG 2 repeat lies at 48-51 (GLFG). The span at 64 to 80 (SFGQQQQQSQTNAFGGS) shows a compositional bias: low complexity. FG repeat units lie at residues 65-66 (FG) and 77-78 (FG). GLFG repeat units lie at residues 86 to 89 (GLFG) and 101 to 104 (GLFG). The stretch at 113-116 (SLFG) is one SLFG 1 repeat. GLFG repeat units follow at residues 125 to 128 (GLFG) and 148 to 151 (GLFG). The stretch at 159–162 (SLFG) is one SLFG 2 repeat. The stretch at 175–178 (GMFG) is one GLFG 7; approximate repeat. Residues 185–188 (SLFG) form an SLFG 3 repeat. The GLFG 8 repeat unit spans residues 199 to 202 (GLFG). Residues 210–213 (SLFG) form an SLFG 4 repeat. The disordered stretch occupies residues 211-242 (LFGSSNNNNNNNNSNNIMSASGGLFGNQQQQL). Residues 214–226 (SSNNNNNNNNSNN) are compositionally biased toward low complexity. The GLFG 9 repeat unit spans residues 233–236 (GLFG).

It belongs to the nucleoporin GLFG family. Component of the nuclear pore complex (NPC). NPC constitutes the exclusive means of nucleocytoplasmic transport. NPCs allow the passive diffusion of ions and small molecules and the active, nuclear transport receptor-mediated bidirectional transport of macromolecules such as proteins, RNAs, ribonucleoparticles (RNPs), and ribosomal subunits across the nuclear envelope. Due to its 8-fold rotational symmetry, all subunits are present with 8 copies or multiples thereof. NUP49 is part of the NUP57 subcomplex (NIC96, NSP1, NUP49, NUP57) interacting with NUP57. Interacts through its FG repeats with karyopherins.

The protein localises to the nucleus. It is found in the nuclear pore complex. The protein resides in the nucleus membrane. Its function is as follows. Functions as a component of the nuclear pore complex (NPC). NPC components, collectively referred to as nucleoporins (NUPs), can play the role of both NPC structural components and of docking or interaction partners for transiently associated nuclear transport factors. Active directional transport is assured by both, a Phe-Gly (FG) repeat affinity gradient for these transport factors across the NPC and a transport cofactor concentration gradient across the nuclear envelope (GSP1 and GSP2 GTPases associated predominantly with GTP in the nucleus, with GDP in the cytoplasm). NUP49 plays an important role in several nuclear transport pathways including poly(A)+ RNA, tRNA, and pre-ribosome transport. In Saccharomyces cerevisiae (strain ATCC 204508 / S288c) (Baker's yeast), this protein is Nucleoporin NUP49/NSP49 (NUP49).